A 311-amino-acid chain; its full sequence is tRNA-cytidine(32) 2-sulfurtransferase (311 aa).

Residues 47-52 (SGGKDS) carry the PP-loop motif motif. Positions 122, 125, and 213 each coordinate [4Fe-4S] cluster.

This sequence belongs to the TtcA family. As to quaternary structure, homodimer. Requires Mg(2+) as cofactor. It depends on [4Fe-4S] cluster as a cofactor.

It localises to the cytoplasm. The enzyme catalyses cytidine(32) in tRNA + S-sulfanyl-L-cysteinyl-[cysteine desulfurase] + AH2 + ATP = 2-thiocytidine(32) in tRNA + L-cysteinyl-[cysteine desulfurase] + A + AMP + diphosphate + H(+). It functions in the pathway tRNA modification. Functionally, catalyzes the ATP-dependent 2-thiolation of cytidine in position 32 of tRNA, to form 2-thiocytidine (s(2)C32). The sulfur atoms are provided by the cysteine/cysteine desulfurase (IscS) system. The protein is tRNA-cytidine(32) 2-sulfurtransferase of Escherichia coli (strain K12 / MC4100 / BW2952).